Here is a 494-residue protein sequence, read N- to C-terminus: NADH-quinone oxidoreductase subunit N (494 aa).

14 helical membrane-spanning segments follow: residues 9–29, 36–56, 73–93, 107–127, 131–151, 166–186, 209–229, 241–261, 278–298, 304–324, 339–359, 382–402, 416–436, and 469–489; these read VIPE…DLFL, LTYV…LSDF, PMSN…LVYS, LGGE…VMMS, FLII…LVAF, FVLG…LYGA, LIFG…AVPF, PTAV…AITI, MLTI…IMQT, LAYS…SGVV, MFYV…IMLL, FAFV…VVGF, GQIW…FYYL, and ALLA…AAII.

It belongs to the complex I subunit 2 family. As to quaternary structure, NDH-1 is composed of 14 different subunits. Subunits NuoA, H, J, K, L, M, N constitute the membrane sector of the complex.

Its subcellular location is the cell inner membrane. The enzyme catalyses a quinone + NADH + 5 H(+)(in) = a quinol + NAD(+) + 4 H(+)(out). Its function is as follows. NDH-1 shuttles electrons from NADH, via FMN and iron-sulfur (Fe-S) centers, to quinones in the respiratory chain. The immediate electron acceptor for the enzyme in this species is believed to be ubiquinone. Couples the redox reaction to proton translocation (for every two electrons transferred, four hydrogen ions are translocated across the cytoplasmic membrane), and thus conserves the redox energy in a proton gradient. The chain is NADH-quinone oxidoreductase subunit N from Herminiimonas arsenicoxydans.